The sequence spans 341 residues: UDP-glucose 4-epimerase (341 aa).

It belongs to the polysaccharide synthase family.

It catalyses the reaction UDP-alpha-D-glucose = UDP-alpha-D-galactose. Functionally, epimerizes UDP-galactose to UDP-glucose. In Rickettsia canadensis (strain McKiel), this protein is UDP-glucose 4-epimerase (capD).